The following is a 316-amino-acid chain: uncharacterized protein (316 aa).

It belongs to the chlamydial CPn_0441/CT_007/TC_0275 family.

This is an uncharacterized protein from Chlamydia pneumoniae (Chlamydophila pneumoniae).